Here is a 316-residue protein sequence, read N- to C-terminus: Pantothenate kinase (316 aa).

ATP is bound at residue 95–102 (GSVAVGKS).

It belongs to the prokaryotic pantothenate kinase family.

The protein resides in the cytoplasm. It carries out the reaction (R)-pantothenate + ATP = (R)-4'-phosphopantothenate + ADP + H(+). Its pathway is cofactor biosynthesis; coenzyme A biosynthesis; CoA from (R)-pantothenate: step 1/5. In Shewanella pealeana (strain ATCC 700345 / ANG-SQ1), this protein is Pantothenate kinase.